The following is a 311-amino-acid chain: Malate dehydrogenase (311 aa).

NAD(+)-binding positions include 7 to 13 and aspartate 34; that span reads GAAGGIG. The substrate site is built by arginine 81 and arginine 87. Residues asparagine 94 and 117 to 119 contribute to the NAD(+) site; that span reads ITN. Asparagine 119 and arginine 153 together coordinate substrate. The Proton acceptor role is filled by histidine 177. Methionine 227 contacts NAD(+).

The protein belongs to the LDH/MDH superfamily. MDH type 1 family. Homodimer.

The catalysed reaction is (S)-malate + NAD(+) = oxaloacetate + NADH + H(+). In terms of biological role, catalyzes the reversible oxidation of malate to oxaloacetate. This chain is Malate dehydrogenase, found in Shewanella amazonensis (strain ATCC BAA-1098 / SB2B).